We begin with the raw amino-acid sequence, 162 residues long: Cytochrome c-type biogenesis protein CcmE (162 aa).

Over 1–8 (MNPRRKKR) the chain is Cytoplasmic. A helical; Signal-anchor for type II membrane protein transmembrane segment spans residues 9–29 (LALVVGLIGGVAAVASLLLYA). Over 30–162 (LNTNLNLFYT…YTETQKGGSR (133 aa)) the chain is Periplasmic. Heme contacts are provided by histidine 131 and tyrosine 135.

The protein belongs to the CcmE/CycJ family.

The protein resides in the cell inner membrane. In terms of biological role, heme chaperone required for the biogenesis of c-type cytochromes. Transiently binds heme delivered by CcmC and transfers the heme to apo-cytochromes in a process facilitated by CcmF and CcmH. The chain is Cytochrome c-type biogenesis protein CcmE from Shewanella amazonensis (strain ATCC BAA-1098 / SB2B).